Reading from the N-terminus, the 387-residue chain is Carbamoyl phosphate synthase small chain (387 aa).

The interval 1–196 (MEGVLSQLAV…FSINKQKFLF (196 aa)) is CPSase. Residues Ser51, Gly245, and Gly247 each coordinate L-glutamine. In terms of domain architecture, Glutamine amidotransferase type-1 spans 197–384 (HVVVYDFGVK…IKLIVSQKTT (188 aa)). The Nucleophile role is filled by Cys273. 4 residues coordinate L-glutamine: Leu274, Gln277, Asn315, and Phe318. Residues His357 and Glu359 contribute to the active site.

Belongs to the CarA family. As to quaternary structure, composed of two chains; the small (or glutamine) chain promotes the hydrolysis of glutamine to ammonia, which is used by the large (or ammonia) chain to synthesize carbamoyl phosphate. Tetramer of heterodimers (alpha,beta)4.

It carries out the reaction hydrogencarbonate + L-glutamine + 2 ATP + H2O = carbamoyl phosphate + L-glutamate + 2 ADP + phosphate + 2 H(+). It catalyses the reaction L-glutamine + H2O = L-glutamate + NH4(+). The protein operates within amino-acid biosynthesis; L-arginine biosynthesis; carbamoyl phosphate from bicarbonate: step 1/1. Its pathway is pyrimidine metabolism; UMP biosynthesis via de novo pathway; (S)-dihydroorotate from bicarbonate: step 1/3. Its function is as follows. Small subunit of the glutamine-dependent carbamoyl phosphate synthetase (CPSase). CPSase catalyzes the formation of carbamoyl phosphate from the ammonia moiety of glutamine, carbonate, and phosphate donated by ATP, constituting the first step of 2 biosynthetic pathways, one leading to arginine and/or urea and the other to pyrimidine nucleotides. The small subunit (glutamine amidotransferase) binds and cleaves glutamine to supply the large subunit with the substrate ammonia. The protein is Carbamoyl phosphate synthase small chain of Buchnera aphidicola subsp. Acyrthosiphon pisum (strain APS) (Acyrthosiphon pisum symbiotic bacterium).